A 190-amino-acid polypeptide reads, in one-letter code: MAKEKQEEQQKQTAPENEKAPKKDIKKEASDKKGDQTSKLKEEIADLKKQLADKDDKYLRAEAEIQNMTNRFNKERAQILKYDGQDLAKSILPVLDNLKRALAIEVVDDNGKQLKKGIQMVHDHLVKALNDHGITEIKADGETFDPTLHQAVQTVPVEEGQKPETVVNVLQAGYQLKDRVLRPAMVVVAQ.

Residues 1–41 are disordered; it reads MAKEKQEEQQKQTAPENEKAPKKDIKKEASDKKGDQTSKLK.

The protein belongs to the GrpE family. As to quaternary structure, homodimer.

The protein localises to the cytoplasm. Participates actively in the response to hyperosmotic and heat shock by preventing the aggregation of stress-denatured proteins, in association with DnaK and GrpE. It is the nucleotide exchange factor for DnaK and may function as a thermosensor. Unfolded proteins bind initially to DnaJ; upon interaction with the DnaJ-bound protein, DnaK hydrolyzes its bound ATP, resulting in the formation of a stable complex. GrpE releases ADP from DnaK; ATP binding to DnaK triggers the release of the substrate protein, thus completing the reaction cycle. Several rounds of ATP-dependent interactions between DnaJ, DnaK and GrpE are required for fully efficient folding. The sequence is that of Protein GrpE from Limosilactobacillus reuteri (strain DSM 20016) (Lactobacillus reuteri).